A 259-amino-acid chain; its full sequence is MNKRRVIYEGKAKILYEGPEPGTLIQYFKDDTTAFDATKKAVLDGKGVLNNRISEFIMTHLTSVGVPNHFIRRLNMREQLVRKVDIIPLEVVVRNIAAGSLSTRLGIPEGQSLPRPLVEFYFKNDALHDPMVSEEHIAAFGWATAQEYDDIIALALRVNDFMSGLFAGAGIRLVDFKIEFGRWFENDHDMPRILLADEISPDSCRLWDAKTGEKMDKDRFRRDMGGVTEAYAEVARRLGIIRESGEETDNVIHFTGGSK.

It belongs to the SAICAR synthetase family.

The catalysed reaction is 5-amino-1-(5-phospho-D-ribosyl)imidazole-4-carboxylate + L-aspartate + ATP = (2S)-2-[5-amino-1-(5-phospho-beta-D-ribosyl)imidazole-4-carboxamido]succinate + ADP + phosphate + 2 H(+). The protein operates within purine metabolism; IMP biosynthesis via de novo pathway; 5-amino-1-(5-phospho-D-ribosyl)imidazole-4-carboxamide from 5-amino-1-(5-phospho-D-ribosyl)imidazole-4-carboxylate: step 1/2. The sequence is that of Phosphoribosylaminoimidazole-succinocarboxamide synthase from Hyphomonas neptunium (strain ATCC 15444).